The sequence spans 121 residues: Large ribosomal subunit protein bL20 (121 aa).

This sequence belongs to the bacterial ribosomal protein bL20 family.

In terms of biological role, binds directly to 23S ribosomal RNA and is necessary for the in vitro assembly process of the 50S ribosomal subunit. It is not involved in the protein synthesizing functions of that subunit. The polypeptide is Large ribosomal subunit protein bL20 (Ruegeria sp. (strain TM1040) (Silicibacter sp.)).